A 702-amino-acid chain; its full sequence is Polyribonucleotide nucleotidyltransferase (702 aa).

Aspartate 493 and aspartate 499 together coordinate Mg(2+). Residues 560–619 enclose the KH domain; the sequence is PRLLTMRIDPERIRDVIGKGGATIRGLTEETGTNIDISDEGVVTIASADKAAAEEAKKRI. Residues 629–697 enclose the S1 motif domain; sequence GKVYDGKVAK…RQGRIRLSMK (69 aa).

This sequence belongs to the polyribonucleotide nucleotidyltransferase family. As to quaternary structure, component of the RNA degradosome, which is a multiprotein complex involved in RNA processing and mRNA degradation. The cofactor is Mg(2+).

Its subcellular location is the cytoplasm. It carries out the reaction RNA(n+1) + phosphate = RNA(n) + a ribonucleoside 5'-diphosphate. In terms of biological role, involved in mRNA degradation. Catalyzes the phosphorolysis of single-stranded polyribonucleotides processively in the 3'- to 5'-direction. In Halorhodospira halophila (strain DSM 244 / SL1) (Ectothiorhodospira halophila (strain DSM 244 / SL1)), this protein is Polyribonucleotide nucleotidyltransferase.